A 252-amino-acid polypeptide reads, in one-letter code: Ubiquinone biosynthesis O-methyltransferase (252 aa).

Residues R51, G70, D91, and M136 each contribute to the S-adenosyl-L-methionine site.

The protein belongs to the methyltransferase superfamily. UbiG/COQ3 family.

The enzyme catalyses a 3-demethylubiquinol + S-adenosyl-L-methionine = a ubiquinol + S-adenosyl-L-homocysteine + H(+). It carries out the reaction a 3-(all-trans-polyprenyl)benzene-1,2-diol + S-adenosyl-L-methionine = a 2-methoxy-6-(all-trans-polyprenyl)phenol + S-adenosyl-L-homocysteine + H(+). Its pathway is cofactor biosynthesis; ubiquinone biosynthesis. Its function is as follows. O-methyltransferase that catalyzes the 2 O-methylation steps in the ubiquinone biosynthetic pathway. The chain is Ubiquinone biosynthesis O-methyltransferase from Albidiferax ferrireducens (strain ATCC BAA-621 / DSM 15236 / T118) (Rhodoferax ferrireducens).